We begin with the raw amino-acid sequence, 519 residues long: Histidine ammonia-lyase (519 aa).

The 5-imidazolinone (Ala-Gly) cross-link spans 146 to 148; it reads ASG. Position 147 is a 2,3-didehydroalanine (Ser) (S147).

Belongs to the PAL/histidase family. Post-translationally, contains an active site 4-methylidene-imidazol-5-one (MIO), which is formed autocatalytically by cyclization and dehydration of residues Ala-Ser-Gly.

It localises to the cytoplasm. The catalysed reaction is L-histidine = trans-urocanate + NH4(+). It functions in the pathway amino-acid degradation; L-histidine degradation into L-glutamate; N-formimidoyl-L-glutamate from L-histidine: step 1/3. The chain is Histidine ammonia-lyase from Psychrobacter sp. (strain PRwf-1).